A 377-amino-acid polypeptide reads, in one-letter code: Protein-tyrosine sulfotransferase 2 (377 aa).

The Cytoplasmic segment spans residues 1 to 8 (MRLSVRRV). Residues 9 to 25 (LLAAGCALVLVLAVQLG) traverse the membrane as a helical; Signal-anchor for type II membrane protein segment. Residues 26 to 377 (QQVLECRAVL…NSTSSHLGSS (352 aa)) lie on the Lumenal side of the membrane. Residue 78-82 (RSGTT) coordinates 3'-phosphoadenylyl sulfate. A disulfide bond links Cys96 and Cys156. The active-site Proton donor/acceptor is the Glu99. The interval 101–105 (RIIPR) is interaction with peptide substrate. 3'-phosphoadenylyl sulfate is bound by residues Arg183, Ser191, and Arg195. Residues Cys225 and Cys233 are joined by a disulfide bond. 3'-phosphoadenylyl sulfate is bound by residues Tyr238, 285 to 294 (STDQVIKPVN), and Lys300. N-linked (GlcNAc...) asparagine glycosylation is found at Asn343 and Asn368.

This sequence belongs to the protein sulfotransferase family. In terms of assembly, homodimer. Can also form heterodimers with TPST1. In terms of processing, N-glycosylated. In terms of tissue distribution, widely expressed.

Its subcellular location is the golgi apparatus membrane. It catalyses the reaction L-tyrosyl-[protein] + 3'-phosphoadenylyl sulfate = O-sulfo-L-tyrosine-[protein] + adenosine 3',5'-bisphosphate + H(+). Its function is as follows. Catalyzes the O-sulfation of tyrosine residues within acidic motifs of polypeptides, using 3'-phosphoadenylyl sulfate (PAPS) as cosubstrate. In Homo sapiens (Human), this protein is Protein-tyrosine sulfotransferase 2 (TPST2).